The primary structure comprises 71 residues: Small ribosomal subunit protein bS21 (71 aa).

Residues 38–71 are disordered; sequence YEKPTTERKRARASAIKRHAKKLARENARRTRLY. A compositionally biased stretch (basic residues) spans 46 to 59; it reads KRARASAIKRHAKK. The span at 60-71 shows a compositional bias: basic and acidic residues; sequence LARENARRTRLY.

It belongs to the bacterial ribosomal protein bS21 family.

This is Small ribosomal subunit protein bS21 from Hamiltonella defensa subsp. Acyrthosiphon pisum (strain 5AT).